The following is a 626-amino-acid chain: Procollagen galactosyltransferase 2 (626 aa).

A signal peptide spans 1 to 27 (MAARPAATLAWSLLLLSSALLREGCRA). Residues Asn-97, Asn-185, Asn-382, and Asn-580 are each glycosylated (N-linked (GlcNAc...) asparagine). Residues 604–626 (NAKNTEALPPPTSLDTVPSRDEL) form a disordered region. Residues 623–626 (RDEL) carry the Prevents secretion from ER motif.

Belongs to the glycosyltransferase 25 family. In terms of tissue distribution, expressed in brain and skeletal muscle.

The protein localises to the endoplasmic reticulum lumen. It carries out the reaction (5R)-5-hydroxy-L-lysyl-[collagen] + UDP-alpha-D-galactose = (5R)-5-O-(beta-D-galactosyl)-5-hydroxy-L-lysyl-[collagen] + UDP + H(+). Beta-galactosyltransferase that transfers beta-galactose to hydroxylysine residues of collagen. The polypeptide is Procollagen galactosyltransferase 2 (COLGALT2) (Homo sapiens (Human)).